The primary structure comprises 285 residues: Diaminopimelate epimerase (285 aa).

The substrate site is built by N15 and N68. C77 serves as the catalytic Proton donor. Substrate contacts are provided by residues G78–N79, N165, N201, and E219–R220. The active-site Proton acceptor is the C228. Residue G229–T230 coordinates substrate.

The protein belongs to the diaminopimelate epimerase family. Homodimer.

It is found in the cytoplasm. It carries out the reaction (2S,6S)-2,6-diaminopimelate = meso-2,6-diaminopimelate. It participates in amino-acid biosynthesis; L-lysine biosynthesis via DAP pathway; DL-2,6-diaminopimelate from LL-2,6-diaminopimelate: step 1/1. Its function is as follows. Catalyzes the stereoinversion of LL-2,6-diaminopimelate (L,L-DAP) to meso-diaminopimelate (meso-DAP), a precursor of L-lysine and an essential component of the bacterial peptidoglycan. The polypeptide is Diaminopimelate epimerase (Synechococcus sp. (strain JA-3-3Ab) (Cyanobacteria bacterium Yellowstone A-Prime)).